Reading from the N-terminus, the 377-residue chain is Enoyl reductase cheB (377 aa).

Positions 18–361 (GGSLVIARDV…REISAEKLVV (344 aa)) are enoyl reductase (ER) domain. 49 to 52 (CDFK) serves as a coordination point for NADP(+). 137-144 (PCCIATMG) lines the substrate pocket. NADP(+) is bound by residues 173 to 176 (SSSV), 200 to 203 (SPKN), Y218, 265 to 266 (LE), and T283. 285 to 289 (GAIII) contributes to the substrate binding site. An NADP(+)-binding site is contributed by 354–355 (IS).

The protein belongs to the zinc-containing alcohol dehydrogenase family. It depends on heme as a cofactor.

The protein operates within secondary metabolite biosynthesis. Enoyl reductase; part of the gene cluster that mediates the biosynthesis of chaetoglobosin A which has a unique inhibitory activity against actin polymerization in mammalian cells. Chaetoglobosin A and its intermediates are involved in the morphological differentiation of C.globosum. The first step of the pathway is the synthesis of prochaetoglobosin I via condensation of one acetyl-CoA, 8 malonyl-CoA, and a L-tryptophan molecule by the PKS-NRPS hybrid synthetase cheA, followed by reduction of backbone double bond to install desired geometry by the enoyl reductase cheB. Further multiple oxidation steps performed by the cytochrome P450 monooxygenases cheE and cheG, as well as by the FAD-linked oxidoreductase cheF, lead to the formation of chaetoglobosin A. Depending on the order of action of these reductases, distinct intermediates can be identified. Within the pathway, the cytochrome P450 monooxygenase cheE catalyzes a stereospecific epoxidation on prochaetoglobosin I, cytoglobosin D, and chaetoglobosin J intermediates. The FAD-linked oxidoreductase cheF performs dehydrogenation of the C-20 hydroxyl groups in the 20-dihyrochaetoglobosin A and cytoglobosin D intermediates. Finally, the cytochrome P450 monooxygenase cheG can catalyze the stereospecific dihydroxylation of prochaetoglobosin I and prochaetoglobosin IV at C-19 and C-20, respectively. The Diels-Alderase cheD may play a role in the post-PKS-NRPS biosynthetic steps catalyzing Diels-Alder cyclization. The chain is Enoyl reductase cheB from Chaetomium globosum (strain ATCC 6205 / CBS 148.51 / DSM 1962 / NBRC 6347 / NRRL 1970) (Soil fungus).